Here is a 310-residue protein sequence, read N- to C-terminus: Tryptophan 2,3-dioxygenase (310 aa).

A disordered region spans residues 1 to 36; the sequence is MQPPGEDAPAGCPFSGARAAHSAPAAPAAHEASHVP. Low complexity predominate over residues 15–36; that stretch reads SGARAAHSAPAAPAAHEASHVP. Residues 79–83, Tyr-141, and Arg-145 contribute to the substrate site; that span reads FIIQH. His-268 lines the heme pocket. Position 282 (Thr-282) interacts with substrate.

This sequence belongs to the tryptophan 2,3-dioxygenase family. As to quaternary structure, homotetramer. Requires heme as cofactor.

It catalyses the reaction L-tryptophan + O2 = N-formyl-L-kynurenine. It participates in amino-acid degradation; L-tryptophan degradation via kynurenine pathway; L-kynurenine from L-tryptophan: step 1/2. Heme-dependent dioxygenase that catalyzes the oxidative cleavage of the L-tryptophan (L-Trp) pyrrole ring and converts L-tryptophan to N-formyl-L-kynurenine. Catalyzes the oxidative cleavage of the indole moiety. The protein is Tryptophan 2,3-dioxygenase of Burkholderia lata (strain ATCC 17760 / DSM 23089 / LMG 22485 / NCIMB 9086 / R18194 / 383).